The primary structure comprises 218 residues: Probable transaldolase (218 aa).

The active-site Schiff-base intermediate with substrate is the K87.

Belongs to the transaldolase family. Type 3B subfamily.

Its subcellular location is the cytoplasm. The enzyme catalyses D-sedoheptulose 7-phosphate + D-glyceraldehyde 3-phosphate = D-erythrose 4-phosphate + beta-D-fructose 6-phosphate. It functions in the pathway carbohydrate degradation; pentose phosphate pathway; D-glyceraldehyde 3-phosphate and beta-D-fructose 6-phosphate from D-ribose 5-phosphate and D-xylulose 5-phosphate (non-oxidative stage): step 2/3. In terms of biological role, transaldolase is important for the balance of metabolites in the pentose-phosphate pathway. This chain is Probable transaldolase, found in Phocaeicola vulgatus (strain ATCC 8482 / DSM 1447 / JCM 5826 / CCUG 4940 / NBRC 14291 / NCTC 11154) (Bacteroides vulgatus).